The sequence spans 746 residues: NAD(P)H-quinone oxidoreductase subunit 5, chloroplastic (746 aa).

16 consecutive transmembrane segments (helical) span residues 9–29, 40–60, 89–109, 125–145, 147–167, 185–205, 221–241, 258–278, 280–300, 327–347, 354–374, 396–416, 425–445, 547–567, 608–628, and 723–743; these read WIIP…LLLF, WTFL…YLSI, IDPL…LVLI, FAYM…SNLI, VYFF…FWFT, GDFG…SFEF, VNLL…IAKS, TPIS…FLVA, LLPL…IGII, LGYM…FHLI, ALLF…VGYS, TAFL…CFWS, LLFS…TAFY, ILFP…IGIP, FSVS…KPFY, and YLFL…FFYF.

This sequence belongs to the complex I subunit 5 family. NDH is composed of at least 16 different subunits, 5 of which are encoded in the nucleus.

It is found in the plastid. The protein localises to the chloroplast thylakoid membrane. It carries out the reaction a plastoquinone + NADH + (n+1) H(+)(in) = a plastoquinol + NAD(+) + n H(+)(out). The catalysed reaction is a plastoquinone + NADPH + (n+1) H(+)(in) = a plastoquinol + NADP(+) + n H(+)(out). In terms of biological role, NDH shuttles electrons from NAD(P)H:plastoquinone, via FMN and iron-sulfur (Fe-S) centers, to quinones in the photosynthetic chain and possibly in a chloroplast respiratory chain. The immediate electron acceptor for the enzyme in this species is believed to be plastoquinone. Couples the redox reaction to proton translocation, and thus conserves the redox energy in a proton gradient. This Olimarabidopsis pumila (Dwarf rocket) protein is NAD(P)H-quinone oxidoreductase subunit 5, chloroplastic (ndhF).